Reading from the N-terminus, the 669-residue chain is Protein real-time (669 aa).

The PRELI/MSF1 domain maps to 3–175; it reads QKFQSPVRVY…FINQLEQEGV (173 aa). The region spanning 284 to 460 is the CRAL-TRIO domain; that stretch reads EPAVVVEHFP…FLGGPCKTMI (177 aa). A GOLD domain is found at 522–641; that stretch reads HQNLYKSVDL…QLNLFYEVLS (120 aa).

Its subcellular location is the mitochondrion. The polypeptide is Protein real-time (Drosophila pseudoobscura pseudoobscura (Fruit fly)).